The chain runs to 268 residues: 4-hydroxy-tetrahydrodipicolinate reductase (268 aa).

Residue 7-12 (GANGRM) participates in NAD(+) binding. R34 lines the NADP(+) pocket. Residues 97–99 (GTT) and 121–124 (SENM) each bind NAD(+). H155 functions as the Proton donor/acceptor in the catalytic mechanism. H156 is a (S)-2,3,4,5-tetrahydrodipicolinate binding site. K159 (proton donor) is an active-site residue. Position 165–166 (165–166 (GT)) interacts with (S)-2,3,4,5-tetrahydrodipicolinate.

Belongs to the DapB family.

The protein resides in the cytoplasm. It catalyses the reaction (S)-2,3,4,5-tetrahydrodipicolinate + NAD(+) + H2O = (2S,4S)-4-hydroxy-2,3,4,5-tetrahydrodipicolinate + NADH + H(+). The enzyme catalyses (S)-2,3,4,5-tetrahydrodipicolinate + NADP(+) + H2O = (2S,4S)-4-hydroxy-2,3,4,5-tetrahydrodipicolinate + NADPH + H(+). Its pathway is amino-acid biosynthesis; L-lysine biosynthesis via DAP pathway; (S)-tetrahydrodipicolinate from L-aspartate: step 4/4. In terms of biological role, catalyzes the conversion of 4-hydroxy-tetrahydrodipicolinate (HTPA) to tetrahydrodipicolinate. This is 4-hydroxy-tetrahydrodipicolinate reductase from Bartonella bacilliformis (strain ATCC 35685 / KC583 / Herrer 020/F12,63).